The primary structure comprises 920 residues: Androgen receptor (920 aa).

Positions 1-559 (MEVQLGLGRV…IDYYFPPQKT (559 aa)) are modulating. Positions 1–587 (MEVQLGLGRV…GSCKVFFKRA (587 aa)) are interaction with ZNF318. Disordered regions lie at residues 36-167 (NPGP…LSLL) and 195-228 (QQQQ…YLGG). Low complexity predominate over residues 44–91 (AASAAPPGASLLLLQQQQQQQQQQQQQQQQQQQQQQQETSPRQQQQQQ). A Phosphoserine; by CDK9 modification is found at Ser83. Ser96 carries the phosphoserine modification. The span at 195–217 (QQQQQEAVSEGSSSGRAREASGA) shows a compositional bias: low complexity. The span at 218-228 (PTSSKDNYLGG) shows a compositional bias: polar residues. Residue Tyr225 is modified to Phosphotyrosine; by CSK. At Ser258 the chain carries Phosphoserine. Residue Tyr269 is modified to Phosphotyrosine; by CSK and TNK2. 4 positions are modified to phosphotyrosine; by CSK: Tyr309, Tyr348, Tyr359, and Tyr364. Tyr365 bears the Phosphotyrosine; by CSK and TNK2 mark. Residue Lys388 forms a Glycyl lysine isopeptide (Lys-Gly) (interchain with G-Cter in SUMO) linkage. Tyr395 bears the Phosphotyrosine; by CSK mark. Residue Lys521 forms a Glycyl lysine isopeptide (Lys-Gly) (interchain with G-Cter in SUMO) linkage. A phosphotyrosine; by CSK mark is found at Tyr535 and Tyr552. An interaction with LPXN region spans residues 552–919 (YYFPPQKTCL…GKVKPIYFHT (368 aa)). 2 NR C4-type zinc fingers span residues 560–580 (CLIC…CGSC) and 596–620 (CASR…LRKC). The segment at residues 560–632 (CLICGDEASG…AGMTLGARKL (73 aa)) is a DNA-binding region (nuclear receptor). Residues 572–662 (YGALTCGSCK…TEETTQKLTV (91 aa)) are interaction with HIPK3. The interaction with CCAR1 stretch occupies residues 592–919 (QKYLCASRND…GKVKPIYFHT (328 aa)). Positions 625-919 (MTLGARKLKK…GKVKPIYFHT (295 aa)) are interaction with KAT7. Ser651 bears the Phosphoserine; by STK4/MST1 mark. The NR LBD domain maps to 669-900 (ECQPIFLNVL…DFPEMMAEII (232 aa)). 17beta-hydroxy-5alpha-androstan-3-one contacts are provided by Asn706 and Arg753. Glycyl lysine isopeptide (Lys-Gly) (interchain with G-Cter in ubiquitin) cross-links involve residues Lys846 and Lys848. A 17beta-hydroxy-5alpha-androstan-3-one-binding site is contributed by Thr878. At Tyr916 the chain carries Phosphotyrosine; by CSK.

This sequence belongs to the nuclear hormone receptor family. NR3 subfamily. As to quaternary structure, binds DNA as a homodimer. Part of a ternary complex containing AR, EFCAB6/DJBP and PARK7. Interacts with HIPK3 and NR0B2 in the presence of androgen. The ligand binding domain interacts with KAT7/HBO1 in the presence of dihydrotestosterone. Interacts with EFCAB6/DJBP, PQBP1, RANBP9, RBAK, SPDEF, SRA1, TGFB1I1 and RREB1. Interacts with ZMIZ1/ZIMP10 and ZMIZ2/ZMIP7 which both enhance its transactivation activity. Interacts with SLC30A9 and RAD54L2/ARIP4. Interacts with MACROD1 (via macro domain). Interacts via the ligand-binding domain with LXXLL and FXXLF motifs from NCOA1, NCOA2, NCOA3 and MAGEA11. Interacts (via nuclear receptor DNA binding domain and nuclear receptor ligand binding domain) with NCOA4. The AR N-terminal poly-Gln region binds Ran resulting in enhancement of AR-mediated transactivation. Ran-binding decreases as the poly-Gln length increases. Interacts with HIP1 (via coiled coil domain). Interacts (via ligand-binding domain) with TRIM68. Interacts with TNK2. Interacts with USP26. Interacts with RNF6. Interacts (regulated by RNF6 probably through polyubiquitination) with RNF14; regulates AR transcriptional activity. Interacts with PRMT2 and TRIM24. Interacts with RACK1. Interacts with RANBP10; this interaction enhances dihydrotestosterone-induced AR transcriptional activity. Interacts with PRPF6 in a hormone-independent way; this interaction enhances dihydrotestosterone-induced AR transcriptional activity. Interacts with STK4/MST1. Interacts with ZIPK/DAPK3. Interacts with LPXN. Interacts with MAK. Part of a complex containing AR, MAK and NCOA3. Interacts with CRY1. Interacts with CCAR1 and GATA2. Interacts with ZNF318. Interacts with BUD31. Interacts with ARID4A. Interacts with ARID4B. Interacts (via NR LBD domain) with ZBTB7A; the interaction is direct and androgen-dependent. Interacts with NCOR1. Interacts with NCOR2. Interacts with CRY2 in a ligand-dependent manner. Sumoylated on Lys-388 (major) and Lys-521. Ubiquitinated. Deubiquitinated by USP26. 'Lys-6' and 'Lys-27'-linked polyubiquitination by RNF6 modulates AR transcriptional activity and specificity. Post-translationally, phosphorylated in prostate cancer cells in response to several growth factors including EGF. Phosphorylation is induced by c-Src kinase (CSK). Tyr-535 is one of the major phosphorylation sites and an increase in phosphorylation and Src kinase activity is associated with prostate cancer progression. Phosphorylation by TNK2 enhances the DNA-binding and transcriptional activity and may be responsible for androgen-independent progression of prostate cancer. Phosphorylation at Ser-83 by CDK9 regulates AR promoter selectivity and cell growth. Phosphorylation by PAK6 leads to AR-mediated transcription inhibition. In terms of processing, palmitoylated by ZDHHC7 and ZDHHC21. Palmitoylation is required for plasma membrane targeting and for rapid intracellular signaling via ERK and AKT kinases and cAMP generation. In terms of tissue distribution, mainly expressed in heart and skeletal muscle. As to expression, expressed in basal and stromal cells of the prostate (at protein level).

The protein localises to the nucleus. The protein resides in the cytoplasm. AIM-100 (4-amino-5,6-biaryl-furo[2,3-d]pyrimidine) suppresses TNK2-mediated phosphorylation at Tyr-269. Inhibits the binding of the Tyr-269 phosphorylated form to androgen-responsive enhancers (AREs) and its transcriptional activity. Steroid hormone receptors are ligand-activated transcription factors that regulate eukaryotic gene expression and affect cellular proliferation and differentiation in target tissues. Transcription factor activity is modulated by bound coactivator and corepressor proteins like ZBTB7A that recruits NCOR1 and NCOR2 to the androgen response elements/ARE on target genes, negatively regulating androgen receptor signaling and androgen-induced cell proliferation. Transcription activation is also down-regulated by NR0B2. Activated, but not phosphorylated, by HIPK3 and ZIPK/DAPK3. Functionally, lacks the C-terminal ligand-binding domain and may therefore constitutively activate the transcription of a specific set of genes independently of steroid hormones. This is Androgen receptor (AR) from Homo sapiens (Human).